Reading from the N-terminus, the 142-residue chain is MKTFTATPETVTRDWFVVDADGKTLGRIATEIAIRLRGKHKPEYTPHVDTGDYIIVVNAEKVTVTGNKAKGKTYYSHSGFPGGIKQISFEKLQAQKPEMIIEKAVKGMLPKGPLGRAMFRKLKVYAGAEHNHTAQQPQVLDI.

This sequence belongs to the universal ribosomal protein uL13 family. In terms of assembly, part of the 50S ribosomal subunit.

Functionally, this protein is one of the early assembly proteins of the 50S ribosomal subunit, although it is not seen to bind rRNA by itself. It is important during the early stages of 50S assembly. The sequence is that of Large ribosomal subunit protein uL13 from Shewanella baltica (strain OS185).